The sequence spans 531 residues: Peptide chain release factor 3 (531 aa).

A tr-type G domain is found at 10–278 (RRRRTFAIIS…SLIDWAPAPK (269 aa)). GTP is bound by residues 19 to 26 (SHPDAGKT), 87 to 91 (DTPGH), and 141 to 144 (NKYD).

It belongs to the TRAFAC class translation factor GTPase superfamily. Classic translation factor GTPase family. PrfC subfamily.

The protein resides in the cytoplasm. Its function is as follows. Increases the formation of ribosomal termination complexes and stimulates activities of RF-1 and RF-2. It binds guanine nucleotides and has strong preference for UGA stop codons. It may interact directly with the ribosome. The stimulation of RF-1 and RF-2 is significantly reduced by GTP and GDP, but not by GMP. This is Peptide chain release factor 3 from Neisseria meningitidis serogroup B (strain ATCC BAA-335 / MC58).